A 125-amino-acid polypeptide reads, in one-letter code: Holo-[acyl-carrier-protein] synthase (125 aa).

Residues D8 and E56 each contribute to the Mg(2+) site.

The protein belongs to the P-Pant transferase superfamily. AcpS family. The cofactor is Mg(2+).

Its subcellular location is the cytoplasm. It carries out the reaction apo-[ACP] + CoA = holo-[ACP] + adenosine 3',5'-bisphosphate + H(+). Functionally, transfers the 4'-phosphopantetheine moiety from coenzyme A to a Ser of acyl-carrier-protein. In Borrelia turicatae (strain 91E135), this protein is Holo-[acyl-carrier-protein] synthase.